The primary structure comprises 218 residues: Adenylate kinase (218 aa).

ATP is bound at residue 10-15; sequence GAGKGT. The tract at residues 30–59 is NMP; that stretch reads STGDMLRAAINEGTPLGLEAKKVMDAGKLV. AMP-binding positions include Thr-31, Arg-36, 57-59, 85-88, and Gln-92; these read KLV and GFPR. The LID stretch occupies residues 122-159; that stretch reads GRRVHPASGRTYHVLFNPPAKEGVDDITGDPLVQREDD. Residues Arg-123 and 132 to 133 each bind ATP; that span reads TY. Residues Arg-156 and Arg-167 each coordinate AMP. Gly-203 is an ATP binding site.

The protein belongs to the adenylate kinase family. In terms of assembly, monomer.

It is found in the cytoplasm. The enzyme catalyses AMP + ATP = 2 ADP. It functions in the pathway purine metabolism; AMP biosynthesis via salvage pathway; AMP from ADP: step 1/1. Catalyzes the reversible transfer of the terminal phosphate group between ATP and AMP. Plays an important role in cellular energy homeostasis and in adenine nucleotide metabolism. This Chlorobium phaeobacteroides (strain BS1) protein is Adenylate kinase.